A 245-amino-acid polypeptide reads, in one-letter code: 1-(5-phosphoribosyl)-5-[(5-phosphoribosylamino)methylideneamino] imidazole-4-carboxamide isomerase (245 aa).

The Proton acceptor role is filled by aspartate 7. The active-site Proton donor is the aspartate 129.

Belongs to the HisA/HisF family.

The protein resides in the cytoplasm. It carries out the reaction 1-(5-phospho-beta-D-ribosyl)-5-[(5-phospho-beta-D-ribosylamino)methylideneamino]imidazole-4-carboxamide = 5-[(5-phospho-1-deoxy-D-ribulos-1-ylimino)methylamino]-1-(5-phospho-beta-D-ribosyl)imidazole-4-carboxamide. It participates in amino-acid biosynthesis; L-histidine biosynthesis; L-histidine from 5-phospho-alpha-D-ribose 1-diphosphate: step 4/9. The chain is 1-(5-phosphoribosyl)-5-[(5-phosphoribosylamino)methylideneamino] imidazole-4-carboxamide isomerase from Escherichia coli (strain SMS-3-5 / SECEC).